We begin with the raw amino-acid sequence, 75 residues long: Conotoxin VnMKLT2-012 (75 aa).

An N-terminal signal peptide occupies residues 1-23; it reads MMKLTCVLIIAVLFLTACQLTTA. Positions 24 to 45 are excised as a propeptide; that stretch reads ETRDEYRAVRSSDEVRNSRSTR. Residues 31-45 show a composition bias toward basic and acidic residues; the sequence is AVRSSDEVRNSRSTR. Residues 31–50 are disordered; the sequence is AVRSSDEVRNSRSTRDCSGS. Cystine bridges form between Cys47–Cys60, Cys54–Cys65, and Cys59–Cys74.

The protein belongs to the conotoxin O1 superfamily. As to expression, expressed by the venom duct.

The protein localises to the secreted. The polypeptide is Conotoxin VnMKLT2-012 (Conus ventricosus (Mediterranean cone)).